Here is a 265-residue protein sequence, read N- to C-terminus: MNNAPIGIFDSGVGGLTVARVIMEQLPNESVIYIGDTANSPYGPKPIAQVRELSLAIGEELVRRGCKMIVIACNTATSAALRDLRERFDVPVLGVILPAVRRAVSTTRNGKIGVIGTEGTIKSGAYQELFAASPSVEVHAQACPSFVSFVERGITSGRQILGVAQGYVEPLQAAGVDTLVLGCTHYPLLTGVIQLAMGDRVTLVSSAEETAKDVFKTLSMTDMLASEDSTPVRTFESTGDPVLFAQLAERFLGPHVTNVEKFAGM.

Residues 10-11 and 42-43 contribute to the substrate site; these read DS and YG. The active-site Proton donor/acceptor is the C73. 74–75 lines the substrate pocket; sequence NT. C183 (proton donor/acceptor) is an active-site residue. Residue 184 to 185 coordinates substrate; that stretch reads TH.

This sequence belongs to the aspartate/glutamate racemases family.

The catalysed reaction is L-glutamate = D-glutamate. The protein operates within cell wall biogenesis; peptidoglycan biosynthesis. Its function is as follows. Provides the (R)-glutamate required for cell wall biosynthesis. The protein is Glutamate racemase of Corynebacterium diphtheriae (strain ATCC 700971 / NCTC 13129 / Biotype gravis).